Reading from the N-terminus, the 332-residue chain is Endo-1,4-beta-xylanase (332 aa).

A signal peptide spans 1–21; it reads MLSSTTLLAILSALALTSVQA. A GH10 domain is found at 26–316; the sequence is KNSLDYLANK…KSTYYVVQQA (291 aa). Glu120 serves as the catalytic Proton donor. Residues Cys128 and Cys160 are joined by a disulfide bond. Glu214 (nucleophile) is an active-site residue. Residues Cys247 and Cys253 are joined by a disulfide bond.

Belongs to the glycosyl hydrolase 10 (cellulase F) family.

The protein localises to the secreted. It carries out the reaction Endohydrolysis of (1-&gt;4)-beta-D-xylosidic linkages in xylans.. Its function is as follows. Requires at least three xylose residues for catalytic activity. Does not have activity against xylobiose. This chain is Endo-1,4-beta-xylanase, found in Naganishia albida (Cryptococcus albidus).